Here is a 622-residue protein sequence, read N- to C-terminus: Low affinity potassium transport system protein Kup (622 aa).

12 helical membrane-spanning segments follow: residues 9 to 29 (LPAI…TSPL), 49 to 69 (VFGF…IKYL), 103 to 123 (VIMG…TPAI), 137 to 157 (PQLD…LFMI), 165 to 185 (VGKL…GLGL), 213 to 233 (VSFI…ALYA), 247 to 267 (WFTV…ALLL), 276 to 296 (PFFL…AALA), 337 to 357 (IYIP…IVSF), 363 to 383 (LAAA…ILST), 396 to 416 (FVAL…TANL), and 419 to 439 (LLSG…VMTT).

The protein belongs to the HAK/KUP transporter (TC 2.A.72) family.

Its subcellular location is the cell inner membrane. The enzyme catalyses K(+)(in) + H(+)(in) = K(+)(out) + H(+)(out). Its function is as follows. Responsible for the low-affinity transport of potassium into the cell. Likely operates as a K(+):H(+) symporter. In Escherichia coli O157:H7, this protein is Low affinity potassium transport system protein Kup.